The primary structure comprises 228 residues: Vacuolar-sorting protein snf7 (228 aa).

Coiled-coil stretches lie at residues 25-94 (ILGL…QINA) and 125-226 (EKVD…QAEM).

This sequence belongs to the SNF7 family. A component of the endosomal sorting required for transport complex III (ESCRT-III).

Its subcellular location is the cytoplasm. It is found in the endosome membrane. Functionally, required for the sorting and concentration of proteins resulting in the entry of these proteins into the invaginating vesicles of the multivesicular body (MVB). Also required for the proteolytic cleavage of the transcription factor pacc-1 in response to alkaline ambient pH. In Neurospora crassa (strain ATCC 24698 / 74-OR23-1A / CBS 708.71 / DSM 1257 / FGSC 987), this protein is Vacuolar-sorting protein snf7 (vsp-3).